We begin with the raw amino-acid sequence, 324 residues long: MTLSTLTSLMIMTLSYMIPILIAVAFLTLVERKILSYMQARKGPNIVGPFGLLQPIADGVKLFIKEPIRPSTSSPFLFILTPILALLLALTIWTPLPLPFPMTDLNLGLLFLLAMSSLTVYSLLWSGWASNSKYALIGALRAVAQTISYEVTLAIILLSTIMLSGNYTLSTLSITQEPMYLIFSSWPLTMMWYISTLAETNRAPFDLTEGESELVSGFNVEYAAGPFALFFLAEYANIMLMNTLTITLFLNPSFLSPPSELFSITLATKVLLLSSSFLWIRASYPRFRYDQLMHLLWKNFLPLTLAMCLWHTSMPISYAGLPPA.

8 consecutive transmembrane segments (helical) span residues M10 to V30, F76 to L96, L107 to G127, V143 to L163, P178 to A198, L229 to F249, E260 to I280, and F300 to G320.

The protein belongs to the complex I subunit 1 family.

It localises to the mitochondrion inner membrane. It carries out the reaction a ubiquinone + NADH + 5 H(+)(in) = a ubiquinol + NAD(+) + 4 H(+)(out). In terms of biological role, core subunit of the mitochondrial membrane respiratory chain NADH dehydrogenase (Complex I) that is believed to belong to the minimal assembly required for catalysis. Complex I functions in the transfer of electrons from NADH to the respiratory chain. The immediate electron acceptor for the enzyme is believed to be ubiquinone. The sequence is that of NADH-ubiquinone oxidoreductase chain 1 (MT-ND1) from Coturnix japonica (Japanese quail).